The sequence spans 52 residues: Large ribosomal subunit protein bL32c (52 aa).

Belongs to the bacterial ribosomal protein bL32 family.

The protein localises to the plastid. Its subcellular location is the chloroplast. The polypeptide is Large ribosomal subunit protein bL32c (Nymphaea alba (White water-lily)).